A 551-amino-acid polypeptide reads, in one-letter code: HTH-type transcriptional regulator SgrR (551 aa).

An HTH marR-type domain is found at 1 to 116; that stretch reads MPSARLQQQF…LVSHLGRSFR (116 aa). Residues 26 to 49 constitute a DNA-binding region (H-T-H motif); that stretch reads LNELAALLSCSRRHMRTLLNTMQD. Residues 163–492 are solute-binding; sequence ELEADIAHHW…IDWQADAARW (330 aa).

Its function is as follows. Activates the small RNA gene sgrS under glucose-phosphate stress conditions as well as yfdZ. Represses its own transcription under both stress and non-stress conditions. Might act as a sensor of the intracellular accumulation of phosphoglucose by binding these molecules in its C-terminal solute-binding domain. The sequence is that of HTH-type transcriptional regulator SgrR from Escherichia coli O6:K15:H31 (strain 536 / UPEC).